A 100-amino-acid chain; its full sequence is UPF0473 protein LMHCC_1068 (100 aa).

Belongs to the UPF0473 family.

This is UPF0473 protein LMHCC_1068 from Listeria monocytogenes serotype 4a (strain HCC23).